The primary structure comprises 909 residues: Nitrate reductase [NADH] (909 aa).

Cys-187 provides a ligand contact to Mo-molybdopterin. Residues 535–610 (SKMYSMSEVK…LEDFRIGELI (76 aa)) enclose the Cytochrome b5 heme-binding domain. 2 residues coordinate heme: His-570 and His-593. The FAD-binding FR-type domain maps to 652-764 (REKIPCKLVD…KGPLGHIEYQ (113 aa)). Residues 704 to 707 (RAYT), 721 to 725 (VVKIY), Phe-726, Phe-733, 738 to 740 (QMS), and Thr-791 contribute to the FAD site.

It belongs to the nitrate reductase family. As to quaternary structure, homodimer. FAD serves as cofactor. Requires heme as cofactor. The cofactor is Mo-molybdopterin.

The catalysed reaction is nitrite + NAD(+) + H2O = nitrate + NADH + H(+). With respect to regulation, regulated by the nitrogen source and controlled by the circadian rhythm. Its function is as follows. Nitrate reductase is a key enzyme involved in the first step of nitrate assimilation in plants, fungi and bacteria. This chain is Nitrate reductase [NADH] (NIA), found in Petunia hybrida (Petunia).